A 513-amino-acid polypeptide reads, in one-letter code: uncharacterized protein (513 aa).

The HDOD domain occupies 254–447 (IPQLPSKLLE…INTIRFHHNL (194 aa)).

This is an uncharacterized protein from Treponema pallidum (strain Nichols).